Reading from the N-terminus, the 214-residue chain is Probable nicotinate-nucleotide adenylyltransferase (214 aa).

This sequence belongs to the NadD family.

The enzyme catalyses nicotinate beta-D-ribonucleotide + ATP + H(+) = deamido-NAD(+) + diphosphate. Its pathway is cofactor biosynthesis; NAD(+) biosynthesis; deamido-NAD(+) from nicotinate D-ribonucleotide: step 1/1. Functionally, catalyzes the reversible adenylation of nicotinate mononucleotide (NaMN) to nicotinic acid adenine dinucleotide (NaAD). The sequence is that of Probable nicotinate-nucleotide adenylyltransferase from Rhodopirellula baltica (strain DSM 10527 / NCIMB 13988 / SH1).